The chain runs to 296 residues: NADH-cytochrome b5 reductase 2 (296 aa).

A helical membrane pass occupies residues 12-29 (LPIALGVGAASIATAIIL). The FAD-binding FR-type domain occupies 47–151 (NEWIDLPIIK…KGPITKWEWK (105 aa)). Position 154–189 (154–189 (SYDSITLLGAGTGINPLYQLVHHIAENPEDNTKIHL)) interacts with FAD.

This sequence belongs to the flavoprotein pyridine nucleotide cytochrome reductase family. It depends on FAD as a cofactor.

It is found in the mitochondrion outer membrane. It catalyses the reaction 2 Fe(III)-[cytochrome b5] + NADH = 2 Fe(II)-[cytochrome b5] + NAD(+) + H(+). Its function is as follows. May mediate the reduction of outer membrane cytochrome b5. This chain is NADH-cytochrome b5 reductase 2 (MCR1), found in Kluyveromyces lactis (strain ATCC 8585 / CBS 2359 / DSM 70799 / NBRC 1267 / NRRL Y-1140 / WM37) (Yeast).